Consider the following 181-residue polypeptide: Squamosa promoter-binding-like protein 5 (181 aa).

The span at Met-1–Gly-10 shows a compositional bias: basic residues. The interval Met-1 to Val-58 is disordered. A compositionally biased stretch (acidic residues) spans Val-22–Asp-39. Over residues Glu-40–Arg-51 the composition is skewed to basic and acidic residues. The SBP-type zinc-finger motif lies at Ser-60–Ile-137. Residues Cys-63, Cys-68, Cys-85, His-88, Cys-104, Cys-107, His-111, and Cys-123 each contribute to the Zn(2+) site. A Bipartite nuclear localization signal motif is present at residues Lys-120–Lys-136. Residues Ala-128 to Arg-181 form a disordered region. A compositionally biased stretch (polar residues) spans Met-170 to Arg-181.

Zn(2+) serves as cofactor. As to expression, expressed in the inflorescence apical meristem and young flowers.

Its subcellular location is the nucleus. The protein resides in the cytoplasm. Trans-acting factor that binds specifically to the consensus nucleotide sequence 5'-TNCGTACAA-3' of AP1 promoter. Promotes both vegetative phase change and flowering. In Arabidopsis thaliana (Mouse-ear cress), this protein is Squamosa promoter-binding-like protein 5 (SPL5).